Consider the following 405-residue polypeptide: L-rhamnonate dehydratase (405 aa).

Residues H33 and R59 each coordinate substrate. 3 residues coordinate Mg(2+): D226, E252, and E280. H329 (proton acceptor) is an active-site residue. Position 349 (E349) interacts with substrate.

The protein belongs to the mandelate racemase/muconate lactonizing enzyme family. RhamD subfamily. As to quaternary structure, homooctamer; tetramer of dimers. Mg(2+) is required as a cofactor.

It carries out the reaction L-rhamnonate = 2-dehydro-3-deoxy-L-rhamnonate + H2O. In terms of biological role, catalyzes the dehydration of L-rhamnonate to 2-keto-3-deoxy-L-rhamnonate (KDR). This is L-rhamnonate dehydratase from Escherichia coli (strain K12 / DH10B).